The primary structure comprises 431 residues: Enolase (431 aa).

Residue Gln-163 participates in (2R)-2-phosphoglycerate binding. Residue Glu-205 is the Proton donor of the active site. Positions 242, 288, and 315 each coordinate Mg(2+). Residues Lys-340, Arg-369, Ser-370, and Lys-391 each contribute to the (2R)-2-phosphoglycerate site. The active-site Proton acceptor is Lys-340.

This sequence belongs to the enolase family. The cofactor is Mg(2+).

It localises to the cytoplasm. The protein localises to the secreted. It is found in the cell surface. It carries out the reaction (2R)-2-phosphoglycerate = phosphoenolpyruvate + H2O. Its pathway is carbohydrate degradation; glycolysis; pyruvate from D-glyceraldehyde 3-phosphate: step 4/5. Functionally, catalyzes the reversible conversion of 2-phosphoglycerate (2-PG) into phosphoenolpyruvate (PEP). It is essential for the degradation of carbohydrates via glycolysis. This chain is Enolase, found in Bacillus anthracis (strain A0248).